A 257-amino-acid chain; its full sequence is Protein-tyrosine-phosphatase IBR5 (257 aa).

The Tyrosine-protein phosphatase domain occupies Phe49 to Gly185. Residue Cys129 is the Phosphocysteine intermediate of the active site. The tract at residues Gln235 to Ser257 is disordered.

This sequence belongs to the protein-tyrosine phosphatase family. As to quaternary structure, interacts with SKP1A/ASK1 and with MPK12. In terms of tissue distribution, expressed in root tips and vasculature, cotyledons, stems, leaves vasculature and hydathodes, flowers, siliques, and seeds.

Its subcellular location is the nucleus. It carries out the reaction O-phospho-L-tyrosyl-[protein] + H2O = L-tyrosyl-[protein] + phosphate. Functionally, required for the transduction of auxin and abscisic acid (ABA) signaling pathways. Dephosphorylates and inactivates the MAP kinase MPK12. The sequence is that of Protein-tyrosine-phosphatase IBR5 (IBR5) from Arabidopsis thaliana (Mouse-ear cress).